Here is a 1220-residue protein sequence, read N- to C-terminus: Plasma membrane calcium-transporting ATPase 1 (1220 aa).

N-acetylglycine is present on glycine 2. Residues 2–105 (GDMANNSVAY…KTFLQLVWEA (104 aa)) are Cytoplasmic-facing. A phosphoserine mark is found at serine 8 and serine 17. The helical transmembrane segment at 106–126 (LQDVTLIILEIAAIVSLGLSF) threads the bilayer. Topologically, residues 127 to 154 (YQPPEGDNALCGEVSVGEEEGEGETGWI) are extracellular. Residues 155–175 (EGAAILLSVVCVVLVTAFNDW) traverse the membrane as a helical segment. Residues 176 to 366 (SKEKQFRGLQ…KEKSVLQGKL (191 aa)) lie on the Cytoplasmic side of the membrane. The segment at 297 to 356 (EEEKKDEKKKEKKNKKQDGAIENRNKAKAQDGAAMEMQPLKSEEGGDGDEKDKKKANLPK) is disordered. Basic and acidic residues-rich tracts occupy residues 312 to 325 (KQDGAIENRNKAKA) and 337 to 356 (KSEEGGDGDEKDKKKANLPK). Residue serine 338 is modified to Phosphoserine. A helical transmembrane segment spans residues 367–386 (TKLAVQIGKAGLLMSAITVI). The Extracellular segment spans residues 387–418 (ILVLYFVIDTFWVQKRPWLAECTPIYIQYFVK). A helical membrane pass occupies residues 419–439 (FFIIGVTVLVVAVPEGLPLAV). The Cytoplasmic portion of the chain corresponds to 440 to 855 (TISLAYSVKK…RNVYDSISKF (416 aa)). Aspartate 475 acts as the 4-aspartylphosphate intermediate in catalysis. Residues aspartate 475, threonine 477, and aspartate 797 each coordinate Mg(2+). The chain crosses the membrane as a helical span at residues 856-876 (LQFQLTVNVVAVIVAFTGACI). At 877–882 (TQDSPL) the chain is on the extracellular side. Residues 883–903 (KAVQMLWVNLIMDTLASLALA) form a helical membrane-spanning segment. The Cytoplasmic portion of the chain corresponds to 904–927 (TEPPTESLLLRKPYGRNKPLISRT). A helical transmembrane segment spans residues 928 to 948 (MMKNILGHAFYQLVVVFTLLF). Over 949-971 (AGEKFFDIDSGRNAPLHAPPSEH) the chain is Extracellular. A helical transmembrane segment spans residues 972 to 991 (YTIVFNTFVLMQLFNEINAR). Over 992 to 1005 (KIHGERNVFEGIFN) the chain is Cytoplasmic. A helical transmembrane segment spans residues 1006-1027 (NAIFCTIVLGTFVVQIIIVQFG). At 1028–1039 (GKPFSCSELSIE) the chain is on the extracellular side. The chain crosses the membrane as a helical span at residues 1040-1060 (QWLWSIFLGMGTLLWGQLIST). Residues 1061–1220 (IPTSRLKFLK…SPLHSLETSL (160 aa)) lie on the Cytoplasmic side of the membrane. Positions 1100–1117 (LRRGQILWFRGLNRIQTQ) are calmodulin-binding subdomain A. Threonine 1116 is subject to Phosphothreonine; by PKC. The required for basolateral membrane targeting stretch occupies residues 1118-1220 (IRVVNAFRSS…SPLHSLETSL (103 aa)). Phosphoserine is present on residues serine 1140 and serine 1155. A disordered region spans residues 1160–1220 (PLIDDTDAED…SPLHSLETSL (61 aa)). Position 1165 is a phosphothreonine (threonine 1165). Serine 1178 is modified (phosphoserine; by PKA). At serine 1182 the chain carries Phosphoserine. Residues 1200-1220 (MNKSATSSSPGSPLHSLETSL) show a composition bias toward polar residues.

The protein belongs to the cation transport ATPase (P-type) (TC 3.A.3) family. Type IIB subfamily. In terms of assembly, monomer. Dimer. Oligomer. Calmodulin binding. Interacts with PDZD11. Interacts with SLC35G1 and STIM1; inhibits calcium-transporting ATPase activity after store depletion. Interacts with YWHAE; interacts with the monomeric and dimeric forms of the YWHAE but prefer the monomer form; this interaction inhibits calcium-transporting ATPase activity. Interacts with NPTN; this interaction stabilizes ATP2B1 and increases ATPase activity; this interaction controls T cell calcium homeostasis following T cell activation. Interacts with EPB41; regulates small intestinal calcium absorption through regulation of membrane expression of ATP2B1. In terms of tissue distribution, isoform B: Ubiquitously expressed. Isoform C: Found in brain cortex, skeletal muscle and heart muscle. Isoform D: Has only been found in fetal skeletal muscle. Isoform K: Found in small intestine and liver. Abundantly expressed in the endometrial epithelial cells and glandular epithelial cells in early-proliferative phase and early-secretory phases.

The protein localises to the cell membrane. It is found in the basolateral cell membrane. Its subcellular location is the synapse. The protein resides in the presynaptic cell membrane. It localises to the cytoplasmic vesicle. The protein localises to the secretory vesicle. It is found in the synaptic vesicle membrane. It catalyses the reaction Ca(2+)(in) + ATP + H2O = Ca(2+)(out) + ADP + phosphate + H(+). In terms of biological role, catalyzes the hydrolysis of ATP coupled with the transport of calcium from the cytoplasm to the extracellular space thereby maintaining intracellular calcium homeostasis. Plays a role in blood pressure regulation through regulation of intracellular calcium concentration and nitric oxide production leading to regulation of vascular smooth muscle cells vasoconstriction. Positively regulates bone mineralization through absorption of calcium from the intestine. Plays dual roles in osteoclast differentiation and survival by regulating RANKL-induced calcium oscillations in preosteoclasts and mediating calcium extrusion in mature osteoclasts. Regulates insulin sensitivity through calcium/calmodulin signaling pathway by regulating AKT1 activation and NOS3 activation in endothelial cells. May play a role in synaptic transmission by modulating calcium and proton dynamics at the synaptic vesicles. This is Plasma membrane calcium-transporting ATPase 1 from Homo sapiens (Human).